Reading from the N-terminus, the 1042-residue chain is Disintegrin and metalloproteinase domain-containing protein unc-71 (1042 aa).

The signal sequence occupies residues 1–23 (MICASKITMLGLLVMCTLGGVLG). At 24 to 746 (KVDIRQTTAN…NIGTTLETAT (723 aa)) the chain is on the extracellular side. 2 N-linked (GlcNAc...) asparagine glycosylation sites follow: asparagine 103 and asparagine 155. The region spanning 227 to 431 (KYVEVALIAD…GNIQCLLNKP (205 aa)) is the Peptidase M12B domain. 4 disulfide bridges follow: cysteine 338–cysteine 426, cysteine 378–cysteine 410, cysteine 380–cysteine 386, and cysteine 496–cysteine 516. A Disintegrin domain is found at 437–524 (LRECGNGVVD…DCPPDGHLID (88 aa)). Residue asparagine 538 is glycosylated (N-linked (GlcNAc...) asparagine). The region spanning 662-699 (SATACPTNNLALLCSGHGHCTTTARCVCFNGWSGVACD) is the EGF-like domain. 3 cysteine pairs are disulfide-bonded: cysteine 666–cysteine 681, cysteine 675–cysteine 687, and cysteine 689–cysteine 698. N-linked (GlcNAc...) asparagine glycosylation occurs at asparagine 703. Residues 747-767 (LFAILLGFGVFLLLCLVCLML) form a helical membrane-spanning segment. Residues 768-1042 (CYRRRSVVEI…KLEMTNSMHN (275 aa)) lie on the Cytoplasmic side of the membrane. Disordered regions lie at residues 779 to 809 (KPSDEKDEESPDRQIKFGNMPSYREEKRKRK), 825 to 850 (DERDSTSLRSRDSAGGSQQLVDRRNG), and 980 to 1028 (HDVG…PSLF). Residues 825–836 (DERDSTSLRSRD) show a composition bias toward basic and acidic residues. Positions 1002–1027 (DSPTLVNGASSSSTSNNYNFRQSPSL) are enriched in polar residues.

It localises to the cell membrane. Functionally, involved in the migration of sex myoblasts (progenitors of egg-laying muscles), Q neuroblasts and BDU interneurons during development. Involved in axon branching and guidance of neurons including GABAergic type D motor neurons. Promotes sex myoblast migration and positioning independently of gonad attraction cues. May act downstream of mig-13 in order to promote the guidance, migration and positioning of Q neuroblasts and their descendants along the anteroposterior body axis. Required for coordinated movements. This is Disintegrin and metalloproteinase domain-containing protein unc-71 from Caenorhabditis elegans.